We begin with the raw amino-acid sequence, 183 residues long: Large ribosomal subunit protein uL6 (183 aa).

Belongs to the universal ribosomal protein uL6 family. As to quaternary structure, part of the 50S ribosomal subunit.

This protein binds to the 23S rRNA, and is important in its secondary structure. It is located near the subunit interface in the base of the L7/L12 stalk, and near the tRNA binding site of the peptidyltransferase center. The chain is Large ribosomal subunit protein uL6 from Ruminiclostridium cellulolyticum (strain ATCC 35319 / DSM 5812 / JCM 6584 / H10) (Clostridium cellulolyticum).